A 400-amino-acid chain; its full sequence is 3-phenylpropionate/cinnamic acid dioxygenase ferredoxin--NAD(+) reductase component (400 aa).

5–36 contributes to the FAD binding site; the sequence is TIIIVGGGQAAAMAAASLRQQGFTGELHLFSD. 146-174 contributes to the NAD(+) binding site; that stretch reads SVVIVGAGTIGLELAASATQRGCKVTVIE.

The protein belongs to the bacterial ring-hydroxylating dioxygenase ferredoxin reductase family. This dioxygenase system consists of four proteins: the two subunits of the hydroxylase component (HcaE and HcaF), a ferredoxin (HcaC) and a ferredoxin reductase (HcaD). FAD is required as a cofactor.

The catalysed reaction is 2 reduced [2Fe-2S]-[ferredoxin] + NAD(+) + H(+) = 2 oxidized [2Fe-2S]-[ferredoxin] + NADH. Its pathway is aromatic compound metabolism; 3-phenylpropanoate degradation. In terms of biological role, part of the multicomponent 3-phenylpropionate dioxygenase, that converts 3-phenylpropionic acid (PP) and cinnamic acid (CI) into 3-phenylpropionate-dihydrodiol (PP-dihydrodiol) and cinnamic acid-dihydrodiol (CI-dihydrodiol), respectively. The protein is 3-phenylpropionate/cinnamic acid dioxygenase ferredoxin--NAD(+) reductase component of Escherichia coli (strain SMS-3-5 / SECEC).